The sequence spans 618 residues: 1-deoxy-D-xylulose-5-phosphate synthase (618 aa).

Thiamine diphosphate is bound by residues His-70 and 111–113 (GHS). Asp-142 serves as a coordination point for Mg(2+). Thiamine diphosphate-binding positions include 143–144 (GS), Asn-171, Tyr-278, and Glu-360. Position 171 (Asn-171) interacts with Mg(2+).

The protein belongs to the transketolase family. DXPS subfamily. As to quaternary structure, homodimer. Mg(2+) is required as a cofactor. It depends on thiamine diphosphate as a cofactor.

The catalysed reaction is D-glyceraldehyde 3-phosphate + pyruvate + H(+) = 1-deoxy-D-xylulose 5-phosphate + CO2. It functions in the pathway metabolic intermediate biosynthesis; 1-deoxy-D-xylulose 5-phosphate biosynthesis; 1-deoxy-D-xylulose 5-phosphate from D-glyceraldehyde 3-phosphate and pyruvate: step 1/1. In terms of biological role, catalyzes the acyloin condensation reaction between C atoms 2 and 3 of pyruvate and glyceraldehyde 3-phosphate to yield 1-deoxy-D-xylulose-5-phosphate (DXP). The sequence is that of 1-deoxy-D-xylulose-5-phosphate synthase from Helicobacter pylori (strain ATCC 700392 / 26695) (Campylobacter pylori).